An 83-amino-acid chain; its full sequence is Mu-theraphotoxin-Hhn2f (83 aa).

The N-terminal stretch at 1–21 is a signal peptide; it reads MKASMFLALAGLVLLFVVGYA. The propeptide occupies 22–48; the sequence is SESEEKEFPIELLSKIFAVDVFKGEER. Disulfide bonds link Cys-50–Cys-65, Cys-57–Cys-70, and Cys-64–Cys-77. Leu-81 is modified (leucine amide).

This sequence belongs to the neurotoxin 10 (Hwtx-1) family. 15 (Hntx-3) subfamily. Monomer. As to expression, expressed by the venom gland.

It localises to the secreted. Lethal neurotoxin. Selectively blocks tetrodotoxin-sensitive voltage-gated sodium channels (Nav). Does not affect tetrodotoxin-resistant voltage-gated sodium channels or calcium channels. The protein is Mu-theraphotoxin-Hhn2f of Cyriopagopus hainanus (Chinese bird spider).